A 539-amino-acid polypeptide reads, in one-letter code: 3-hydroxy-3-methylglutaryl-coenzyme A reductase 1 (539 aa).

The chain crosses the membrane as a helical span at residues 63–83; the sequence is FATVVCQLASVVYLLSLFAHP. The linker stretch occupies residues 84–124; it reads DAPATTTGDDDDGQGGSRRARPAAAEPAPMHGHGGGMMEAD. The tract at residues 87 to 116 is disordered; that stretch reads ATTTGDDDDGQGGSRRARPAAAEPAPMHGH. A compositionally biased stretch (low complexity) spans 105 to 114; sequence PAAAEPAPMH. Residues 125 to 539 form a catalytic region; sequence DEEIVAAVAS…SSKDVAKAAS (415 aa). Catalysis depends on glutamate 218, which acts as the Charge relay system. Residue asparagine 282 is glycosylated (N-linked (GlcNAc...) asparagine). Residues lysine 350 and aspartate 426 each act as charge relay system in the active site. Residues 496 to 516 traverse the membrane as a helical segment; the sequence is LATIVAGSVLAGELSLLAALA. The Proton donor role is filled by histidine 524. Asparagine 528 carries an N-linked (GlcNAc...) asparagine glycan.

This sequence belongs to the HMG-CoA reductase family.

It localises to the endoplasmic reticulum membrane. The enzyme catalyses (R)-mevalonate + 2 NADP(+) + CoA = (3S)-3-hydroxy-3-methylglutaryl-CoA + 2 NADPH + 2 H(+). It participates in metabolic intermediate biosynthesis; (R)-mevalonate biosynthesis; (R)-mevalonate from acetyl-CoA: step 3/3. In terms of biological role, catalyzes the synthesis of mevalonate. The specific precursor of all isoprenoid compounds present in plants. The chain is 3-hydroxy-3-methylglutaryl-coenzyme A reductase 1 (HMG1) from Oryza sativa subsp. indica (Rice).